A 624-amino-acid polypeptide reads, in one-letter code: tRNA uridine 5-carboxymethylaminomethyl modification enzyme MnmG (624 aa).

Residues 13 to 18 (GGGHAG), valine 125, and serine 180 contribute to the FAD site. Residue 273-287 (GPRYCPSIEDKIVRF) coordinates NAD(+). Glutamine 370 is an FAD binding site.

It belongs to the MnmG family. As to quaternary structure, homodimer. Heterotetramer of two MnmE and two MnmG subunits. It depends on FAD as a cofactor.

The protein resides in the cytoplasm. Its function is as follows. NAD-binding protein involved in the addition of a carboxymethylaminomethyl (cmnm) group at the wobble position (U34) of certain tRNAs, forming tRNA-cmnm(5)s(2)U34. The polypeptide is tRNA uridine 5-carboxymethylaminomethyl modification enzyme MnmG (Legionella pneumophila (strain Lens)).